The sequence spans 433 residues: Glucose-6-phosphate isomerase (433 aa).

E285 acts as the Proton donor in catalysis. Catalysis depends on residues H306 and K421.

It belongs to the GPI family.

The protein resides in the cytoplasm. It catalyses the reaction alpha-D-glucose 6-phosphate = beta-D-fructose 6-phosphate. Its pathway is carbohydrate biosynthesis; gluconeogenesis. It functions in the pathway carbohydrate degradation; glycolysis; D-glyceraldehyde 3-phosphate and glycerone phosphate from D-glucose: step 2/4. In terms of biological role, catalyzes the reversible isomerization of glucose-6-phosphate to fructose-6-phosphate. The polypeptide is Glucose-6-phosphate isomerase (Mycoplasma mobile (strain ATCC 43663 / 163K / NCTC 11711) (Mesomycoplasma mobile)).